An 884-amino-acid polypeptide reads, in one-letter code: E3 ubiquitin-protein ligase BRE1-like 1 (884 aa).

The segment at 1-37 (MGSTGEPDRKRRLSSSVAPGGGAPVSPAKRLAVAPTS) is disordered. Positions 49–86 (YKNQKLSEQLEAHKFEYRALENKFAGLKEKQRTHNETL) form a coiled coil. The disordered stretch occupies residues 107–127 (KSGSPNSSPGSGHNNVQKDGT). A compositionally biased stretch (low complexity) spans 108-121 (SGSPNSSPGSGHNN). Coiled coils occupy residues 216 to 541 (LNNV…ELKL), 580 to 663 (SKLE…LQQI), 696 to 762 (RNLQ…QSLD), and 789 to 827 (KKRIEDDLEVMSRKASSLRAKARESAVLEKLRHEVKEYR). Residues 832–871 (CGICHDRQKEVVITKCYHLFCNQCIQKSLGNRQRRCPSCS) form an RING-type zinc finger.

This sequence belongs to the BRE1 family. Interacts with SKIPA. Interacts with HUB2.

It localises to the nucleus. The catalysed reaction is S-ubiquitinyl-[E2 ubiquitin-conjugating enzyme]-L-cysteine + [acceptor protein]-L-lysine = [E2 ubiquitin-conjugating enzyme]-L-cysteine + N(6)-ubiquitinyl-[acceptor protein]-L-lysine.. It functions in the pathway protein modification; protein ubiquitination. E3 ubiquitin-protein ligase that monoubiquitinates H2B to form H2BK143ub1. H2BK143ub1 gives a specific tag for epigenetic transcriptional activation and is a prerequisite for H3 Lys-4 methylation (H3K4me). It thereby plays a central role in histone code and gene regulation. H2B monoubiquitination (H2BK143ub1), mediated by HUB1, modulates transcriptional regulation of anther development, likely by promoting histone H3K4 dimethylation (H3K4me2) in the chromatin of the key tapetum degradation-related genes C4, CP1 and UDT1. This is E3 ubiquitin-protein ligase BRE1-like 1 from Oryza sativa subsp. japonica (Rice).